Reading from the N-terminus, the 235-residue chain is uncharacterized protein (235 aa).

The helical transmembrane segment at 27–47 threads the bilayer; sequence AMKLWSTWITLLILTFFCSEC. The 62-residue stretch at 124–185 folds into the CX domain; that stretch reads YFWGESKYVP…CCGYDCCSNS (62 aa). The chain crosses the membrane as a helical span at residues 187-207; the sequence is IFTSIFSLLVILLIVSVLSIF.

Its subcellular location is the membrane. This is an uncharacterized protein from Caenorhabditis elegans.